The following is an 855-amino-acid chain: Glucans biosynthesis glucosyltransferase H (855 aa).

The next 6 helical transmembrane spans lie at I142–L162, I196–M216, V515–L535, L572–W592, T606–F626, and F682–I702.

Belongs to the glycosyltransferase 2 family. OpgH subfamily.

The protein resides in the cell inner membrane. The protein operates within glycan metabolism; osmoregulated periplasmic glucan (OPG) biosynthesis. Its function is as follows. Involved in the biosynthesis of osmoregulated periplasmic glucans (OPGs). This chain is Glucans biosynthesis glucosyltransferase H, found in Pseudomonas entomophila (strain L48).